Reading from the N-terminus, the 419-residue chain is Hyaluronidase-3 (419 aa).

The N-terminal stretch at 1–16 (MTMQLGLALVLGVAMC) is a signal peptide. Cystine bridges form between cysteine 42–cysteine 331, cysteine 205–cysteine 220, cysteine 356–cysteine 367, cysteine 361–cysteine 395, and cysteine 397–cysteine 406. Asparagine 69 is a glycosylation site (N-linked (GlcNAc...) asparagine). The active-site Proton donor is the glutamate 129. Asparagine 215 carries an N-linked (GlcNAc...) asparagine glycan. Positions 352–407 (AAMACSHQRCHGHGRCAWQDPGQLKVFLHLHPGGSPGAWESFSCRCYWGWAGPTCQ) constitute an EGF-like domain.

This sequence belongs to the glycosyl hydrolase 56 family. N-glycosylated. In terms of tissue distribution, highly expressed in bladder, spleen and liver. Expressed at low levels in the kidney.

It is found in the secreted. The protein resides in the cell membrane. Its subcellular location is the cytoplasmic vesicle. The protein localises to the secretory vesicle. It localises to the acrosome. It is found in the endoplasmic reticulum. The protein resides in the early endosome. The enzyme catalyses Random hydrolysis of (1-&gt;4)-linkages between N-acetyl-beta-D-glucosamine and D-glucuronate residues in hyaluronate.. Functionally, facilitates sperm penetration into the layer of cumulus cells surrounding the egg by digesting hyaluronic acid. Involved in induction of the acrosome reaction in the sperm. Involved in follicular atresia, the breakdown of immature ovarian follicles that are not selected to ovulate. Induces ovarian granulosa cell apoptosis, possibly via apoptotic signaling pathway involving CASP8 and CASP3 activation, and poly(ADP-ribose) polymerase (PARP) cleavage. Has no hyaluronidase activity in embryonic fibroblasts in vitro. Has no hyaluronidase activity in granulosa cells in vitro. This Sus scrofa (Pig) protein is Hyaluronidase-3 (HYAL3).